The sequence spans 612 residues: Baeyer-Villiger monooxygenase 4 (612 aa).

FAD contacts are provided by residues Glu99, Thr107–Trp110, Asp119, Tyr125, and Ala169. Gln117–Asp119 serves as a coordination point for NADP(+). Residues Thr253–Gln259, Arg276–Thr277, and Lys393–Arg394 each bind NADP(+).

It belongs to the FAD-binding monooxygenase family. Requires FAD as cofactor.

Functionally, catalyzes a Baeyer-Villiger oxidation reaction, i.e. the insertion of an oxygen atom into a carbon-carbon bond adjacent to a carbonyl, which converts ketones to esters or lactones using NADPH as an electron donor. Has a broad substrate scope and oxidizes different compounds including substituted and unsubstituted alicyclic, bicyclic-, aliphatic-ketones, ketones with an aromatic moiety, and sulfides. The highest activities are measured for 2- and 3-methylcyclohexanone, phenylacetone, bicyclo[3.2.0]hept-2-en-6-one and menthone. Cannot use NADH instead of NADPH. Is not active on benzaldehyde. The sequence is that of Baeyer-Villiger monooxygenase 4 from Dietzia sp. (strain D5).